Reading from the N-terminus, the 611-residue chain is CRS2-associated factor 2, chloroplastic (611 aa).

Residues 1 to 58 (MPPPPPQRPASSHVGRANLFSASPPPLSNRRYPHHRSLPLPPVSPRRRDPKKHSQQPS) constitute a chloroplast transit peptide. The disordered stretch occupies residues 1–72 (MPPPPPQRPA…TDSGPTRTVT (72 aa)). A compositionally biased stretch (polar residues) spans 55–72 (QQPSQEEPTDSGPTRTVT). CRM domains lie at 232-328 (EPLT…TRPR) and 350-446 (DGFT…YSKP). Residues 486–509 (KMFKLWKSAVDSSLALLLDDAEAN) are CRS2 binding. The segment at 554 to 578 (MNDEPETSVAGNEEGQLEQSPDLRD) is disordered.

Interacts with CRS2 and RNA. Part of large ribonucleo-protein complexes that include group IIB introns, CRS2 and CAF2.

Its subcellular location is the plastid. The protein localises to the chloroplast stroma. Its function is as follows. Required for the splicing of group IIB introns in chloroplasts. Forms splicing particles with CRS2. Interacts with RNA and confers intron specificity of the splicing particles. This chain is CRS2-associated factor 2, chloroplastic (CAF2), found in Zea mays (Maize).